Consider the following 876-residue polypeptide: Alanine--tRNA ligase (876 aa).

Residues histidine 565, histidine 569, cysteine 667, and histidine 671 each contribute to the Zn(2+) site.

It belongs to the class-II aminoacyl-tRNA synthetase family. The cofactor is Zn(2+).

It localises to the cytoplasm. The catalysed reaction is tRNA(Ala) + L-alanine + ATP = L-alanyl-tRNA(Ala) + AMP + diphosphate. Catalyzes the attachment of alanine to tRNA(Ala) in a two-step reaction: alanine is first activated by ATP to form Ala-AMP and then transferred to the acceptor end of tRNA(Ala). Also edits incorrectly charged Ser-tRNA(Ala) and Gly-tRNA(Ala) via its editing domain. The chain is Alanine--tRNA ligase from Staphylococcus aureus (strain bovine RF122 / ET3-1).